Consider the following 346-residue polypeptide: Protein farnesyltransferase/geranylgeranyltransferase type-1 subunit alpha (346 aa).

5 PFTA repeats span residues 59–93, 94–128, 130–164, 165–198, and 205–239; these read RSTR…ALGV, DLRE…KLGA, AVTN…ALGG, WEDE…RSPL, and MREL…NDTQ.

This sequence belongs to the protein prenyltransferase subunit alpha family. In terms of assembly, heterodimer of an alpha and a beta subunit. Mg(2+) is required as a cofactor.

It carries out the reaction L-cysteinyl-[protein] + (2E,6E)-farnesyl diphosphate = S-(2E,6E)-farnesyl-L-cysteinyl-[protein] + diphosphate. The enzyme catalyses geranylgeranyl diphosphate + L-cysteinyl-[protein] = S-geranylgeranyl-L-cysteinyl-[protein] + diphosphate. In terms of biological role, essential subunit of both the farnesyltransferase and the geranylgeranyltransferase complex. Contributes to the transfer of a farnesyl or geranylgeranyl moiety from farnesyl or geranylgeranyl diphosphate to a cysteine at the fourth position from the C-terminus of several proteins having the C-terminal sequence Cys-aliphatic-aliphatic-X. This chain is Protein farnesyltransferase/geranylgeranyltransferase type-1 subunit alpha (FTA), found in Solanum lycopersicum (Tomato).